The chain runs to 503 residues: Probable cytosol aminopeptidase (503 aa).

Mn(2+) contacts are provided by Lys274 and Asp279. Lys286 is an active-site residue. Mn(2+) is bound by residues Asp297, Asp356, and Glu358. The active site involves Arg360.

It belongs to the peptidase M17 family. Mn(2+) serves as cofactor.

It localises to the cytoplasm. It catalyses the reaction Release of an N-terminal amino acid, Xaa-|-Yaa-, in which Xaa is preferably Leu, but may be other amino acids including Pro although not Arg or Lys, and Yaa may be Pro. Amino acid amides and methyl esters are also readily hydrolyzed, but rates on arylamides are exceedingly low.. The catalysed reaction is Release of an N-terminal amino acid, preferentially leucine, but not glutamic or aspartic acids.. In terms of biological role, presumably involved in the processing and regular turnover of intracellular proteins. Catalyzes the removal of unsubstituted N-terminal amino acids from various peptides. In Burkholderia cenocepacia (strain ATCC BAA-245 / DSM 16553 / LMG 16656 / NCTC 13227 / J2315 / CF5610) (Burkholderia cepacia (strain J2315)), this protein is Probable cytosol aminopeptidase.